Here is a 1029-residue protein sequence, read N- to C-terminus: Toll-like receptor 9 (1029 aa).

Residues 1-24 (MGPYCAPHPLSLLVQAAALAAALA) form the signal peptide. Topologically, residues 25 to 815 (QGTLPAFLPC…LCLDETLSLD (791 aa)) are extracellular. Residues Cys34 and Cys44 are joined by a disulfide bond. 46 to 50 (WLFLK) contributes to the DNA binding site. LRR repeat units lie at residues 61–84 (RANV…DFVH), 86–109 (SNLR…HFPC), 121–146 (VPTL…SLVS), 149–165 (LSRT…FTGL), 166–189 (HALR…AVEV), 197–220 (LGNL…LPPS), 222–241 (DTLL…DLAN), 242–267 (LTAL…CREC), 282–305 (LSRL…WFRG), 307–331 (GRLQ…IFRN), 332–355 (LTQL…HLQL), 362–385 (LVSL…TLRP), 389–412 (LPKL…IFGA), 414–439 (PSLL…LGEV), 469–492 (CNLN…MFTR), 494–517 (SRLQ…QFVP), 518–541 (LTRL…SFTE), 543–570 (PQLE…SFVA), 572–596 (LPSL…LSSA), 598–620 (LRAL…LYLC), 625–648 (LRNL…HLDN), 650–673 (PKSL…SLTV), 674–697 (LPQL…SLPP), 699–721 (TRLQ…FFVL), 722–745 (ANRL…WFGR), and 747–770 (TETL…AFVD). Asn63 is a glycosylation site (N-linked (GlcNAc...) asparagine). Residues 71 to 76 (SNRIHH) and 94 to 108 (KWNC…MHFP) each bind DNA. Cys97 and Cys109 form a disulfide bridge. A glycan (N-linked (GlcNAc...) asparagine) is linked at Asn128. DNA-binding positions include Tyr131, Arg151, and 178 to 180 (YYK). A disulfide bridge links Cys177 with Cys183. An N-linked (GlcNAc...) asparagine glycan is attached at Asn199. Tyr207 contacts DNA. N-linked (GlcNAc...) asparagine glycans are attached at residues Asn209 and Asn241. Intrachain disulfides connect Cys254–Cys267 and Cys257–Cys264. Residue Cys257 is the site of S-palmitoyl cysteine attachment. Residue Arg261 participates in DNA binding. A lipid anchor (S-palmitoyl cysteine) is attached at Cys264. Residues Asn331, Asn339, and Asn380 are each glycosylated (N-linked (GlcNAc...) asparagine). A disulfide bridge links Cys469 with Cys498. N-linked (GlcNAc...) asparagine glycans are attached at residues Asn472 and Asn511. N-linked (GlcNAc...) asparagine glycosylation is present at Asn565. Residues Asn667 and Asn692 are each glycosylated (N-linked (GlcNAc...) asparagine). Asn729 is a glycosylation site (N-linked (GlcNAc...) asparagine). 2 disulfides stabilise this stretch: Cys762–Cys788 and Cys764–Cys807. A helical membrane pass occupies residues 816-836 (CFGFSLLMVALGLAVPMLHHL). Topologically, residues 837 to 1029 (CGWDLWYCFH…NFCRGPTTAE (193 aa)) are cytoplasmic. The TIR domain maps to 864–1009 (LLYDAFVVFD…SFWANLGMAL (146 aa)).

The protein belongs to the Toll-like receptor family. As to quaternary structure, monomer and homodimer. Exists as a monomer in the absence of unmethylated cytidine-phosphate-guanosine (CpG) ligand. Proteolytic processing of an insertion loop (Z-loop) is required for homodimerization upon binding to the unmethylated CpG ligand leading to its activation. Interacts with MYD88 via their respective TIR domains. Interacts with BTK. Interacts (via transmembrane domain) with UNC93B1. Interacts with CD300LH; the interaction may promote full activation of TLR9-triggered innate responses. Interacts with CNPY3 and HSP90B1; this interaction is required for proper folding in the endoplasmic reticulum. Interacts with SMPDL3B. Interacts with CD82; this interaction is essential for TLR9-dependent myddosome formation in response to CpG stimulation. Activated by proteolytic cleavage of the flexible loop between repeats LRR14 and LRR15 within the ectodomain. Cleavage requires UNC93B1. Proteolytically processed by first removing the majority of the ectodomain by either asparagine endopeptidase (AEP) or a cathepsin followed by a trimming event that is solely cathepsin mediated and required for optimal receptor signaling. In terms of processing, palmitoylated by ZDHHC3 in the Golgi regulates TLR9 trafficking from the Golgi to endosomes. Depalmitoylation by PPT1 controls the release of TLR9 from UNC93B1 in endosomes.

The protein localises to the endoplasmic reticulum membrane. Its subcellular location is the endosome. It is found in the lysosome. It localises to the cytoplasmic vesicle. The protein resides in the phagosome. Its function is as follows. Key component of innate and adaptive immunity. TLRs (Toll-like receptors) control host immune response against pathogens through recognition of molecular patterns specific to microorganisms. TLR9 is a nucleotide-sensing TLR which is activated by unmethylated cytidine-phosphate-guanosine (CpG) dinucleotides. Acts via MYD88 and TRAF6, leading to NF-kappa-B activation, cytokine secretion and the inflammatory response. Upon CpG stimulation, induces B-cell proliferation, activation, survival and antibody production. This is Toll-like receptor 9 (TLR9) from Ovis aries (Sheep).